The primary structure comprises 428 residues: Serine--tRNA ligase (428 aa).

L-serine is bound at residue 231 to 233; the sequence is TAE. 262–264 is an ATP binding site; sequence RAE. Glu-285 is a binding site for L-serine. 349–352 contacts ATP; that stretch reads EISS. Ser-385 provides a ligand contact to L-serine.

It belongs to the class-II aminoacyl-tRNA synthetase family. Type-1 seryl-tRNA synthetase subfamily. Homodimer. The tRNA molecule binds across the dimer.

The protein localises to the cytoplasm. It carries out the reaction tRNA(Ser) + L-serine + ATP = L-seryl-tRNA(Ser) + AMP + diphosphate + H(+). The enzyme catalyses tRNA(Sec) + L-serine + ATP = L-seryl-tRNA(Sec) + AMP + diphosphate + H(+). It functions in the pathway aminoacyl-tRNA biosynthesis; selenocysteinyl-tRNA(Sec) biosynthesis; L-seryl-tRNA(Sec) from L-serine and tRNA(Sec): step 1/1. In terms of biological role, catalyzes the attachment of serine to tRNA(Ser). Is also able to aminoacylate tRNA(Sec) with serine, to form the misacylated tRNA L-seryl-tRNA(Sec), which will be further converted into selenocysteinyl-tRNA(Sec). The polypeptide is Serine--tRNA ligase (Methylorubrum extorquens (strain CM4 / NCIMB 13688) (Methylobacterium extorquens)).